Here is a 387-residue protein sequence, read N- to C-terminus: Phosphoglycerate kinase (387 aa).

Substrate-binding positions include 21–23 (DLN), R36, 59–62 (HLGR), R113, and R146. ATP is bound by residues K197, E314, and 340 to 343 (GGDT).

It belongs to the phosphoglycerate kinase family. Monomer.

The protein localises to the cytoplasm. It catalyses the reaction (2R)-3-phosphoglycerate + ATP = (2R)-3-phospho-glyceroyl phosphate + ADP. It functions in the pathway carbohydrate degradation; glycolysis; pyruvate from D-glyceraldehyde 3-phosphate: step 2/5. The chain is Phosphoglycerate kinase from Alcanivorax borkumensis (strain ATCC 700651 / DSM 11573 / NCIMB 13689 / SK2).